Consider the following 498-residue polypeptide: Lysine--tRNA ligase (498 aa).

Positions 409 and 416 each coordinate Mg(2+).

Belongs to the class-II aminoacyl-tRNA synthetase family. In terms of assembly, homodimer. Mg(2+) serves as cofactor.

The protein localises to the cytoplasm. It carries out the reaction tRNA(Lys) + L-lysine + ATP = L-lysyl-tRNA(Lys) + AMP + diphosphate. In Dichelobacter nodosus (strain VCS1703A), this protein is Lysine--tRNA ligase.